A 358-amino-acid polypeptide reads, in one-letter code: UDP-N-acetylglucosamine--N-acetylmuramyl-(pentapeptide) pyrophosphoryl-undecaprenol N-acetylglucosamine transferase (358 aa).

UDP-N-acetyl-alpha-D-glucosamine-binding positions include 11–13 (TGG), Asn120, Arg161, Ser188, and Gln282.

The protein belongs to the glycosyltransferase 28 family. MurG subfamily.

It is found in the cell inner membrane. It catalyses the reaction di-trans,octa-cis-undecaprenyl diphospho-N-acetyl-alpha-D-muramoyl-L-alanyl-D-glutamyl-meso-2,6-diaminopimeloyl-D-alanyl-D-alanine + UDP-N-acetyl-alpha-D-glucosamine = di-trans,octa-cis-undecaprenyl diphospho-[N-acetyl-alpha-D-glucosaminyl-(1-&gt;4)]-N-acetyl-alpha-D-muramoyl-L-alanyl-D-glutamyl-meso-2,6-diaminopimeloyl-D-alanyl-D-alanine + UDP + H(+). It functions in the pathway cell wall biogenesis; peptidoglycan biosynthesis. Its function is as follows. Cell wall formation. Catalyzes the transfer of a GlcNAc subunit on undecaprenyl-pyrophosphoryl-MurNAc-pentapeptide (lipid intermediate I) to form undecaprenyl-pyrophosphoryl-MurNAc-(pentapeptide)GlcNAc (lipid intermediate II). The protein is UDP-N-acetylglucosamine--N-acetylmuramyl-(pentapeptide) pyrophosphoryl-undecaprenol N-acetylglucosamine transferase of Synechococcus sp. (strain CC9605).